The sequence spans 255 residues: 5'-nucleotidase SurE (255 aa).

A divalent metal cation contacts are provided by aspartate 8, aspartate 9, serine 39, and asparagine 95.

This sequence belongs to the SurE nucleotidase family. Requires a divalent metal cation as cofactor.

It is found in the cytoplasm. It carries out the reaction a ribonucleoside 5'-phosphate + H2O = a ribonucleoside + phosphate. In terms of biological role, nucleotidase that shows phosphatase activity on nucleoside 5'-monophosphates. The protein is 5'-nucleotidase SurE of Herpetosiphon aurantiacus (strain ATCC 23779 / DSM 785 / 114-95).